Reading from the N-terminus, the 435-residue chain is Glutamyl-tRNA reductase (435 aa).

Substrate is bound by residues 49 to 52 (TCNR), serine 109, 114 to 116 (ETQ), and glutamine 120. The active-site Nucleophile is cysteine 50. 189 to 194 (GAGEMS) contacts NADP(+).

This sequence belongs to the glutamyl-tRNA reductase family. Homodimer.

It carries out the reaction (S)-4-amino-5-oxopentanoate + tRNA(Glu) + NADP(+) = L-glutamyl-tRNA(Glu) + NADPH + H(+). It functions in the pathway porphyrin-containing compound metabolism; protoporphyrin-IX biosynthesis; 5-aminolevulinate from L-glutamyl-tRNA(Glu): step 1/2. Catalyzes the NADPH-dependent reduction of glutamyl-tRNA(Glu) to glutamate 1-semialdehyde (GSA). In Listeria monocytogenes serovar 1/2a (strain ATCC BAA-679 / EGD-e), this protein is Glutamyl-tRNA reductase.